The following is a 107-amino-acid chain: UPF0145 protein YbjQ (107 aa).

This sequence belongs to the UPF0145 family.

In Escherichia coli O139:H28 (strain E24377A / ETEC), this protein is UPF0145 protein YbjQ.